The sequence spans 323 residues: Aquaporin NIP3-1 (323 aa).

The residue at position 1 (Met-1) is an N-acetylmethionine. 2 helical membrane passes run 45 to 65 (LIGEFVGTFTMIFAGCSAIVV) and 73 to 93 (VTLPGIALVWGLVVTVMIYSI). The short motif at 102-104 (NPA) is the NPA 1 element. Helical transmembrane passes span 122 to 142 (GYIAAQLLGSTLAAAVLRLVF), 167 to 187 (TSFVMEFIATFNLMFVISAVA), and 196 to 216 (FAGIAIGATIVLDILFSGPIS). The short motif at 221–223 (NPA) is the NPA 2 element. Residues 239–259 (WLYIVSPVIGALSGAWTYGLL) traverse the membrane as a helical segment.

The protein belongs to the MIP/aquaporin (TC 1.A.8) family. NIP (TC 1.A.8.12) subfamily.

The protein localises to the membrane. Its function is as follows. Aquaporins facilitate the transport of water and small neutral solutes across cell membranes. In Arabidopsis thaliana (Mouse-ear cress), this protein is Aquaporin NIP3-1 (NIP3-1).